Reading from the N-terminus, the 232-residue chain is Putative homeobox protein NANOG2 (232 aa).

Residues 1-10 show a composition bias toward basic and acidic residues; that stretch reads MDLPIEDSHD. The tract at residues 1-39 is disordered; sequence MDLPIEDSHDSSTSPKGKQPTTAEKSATKKEDKVPVKKQ. The segment covering 11–25 has biased composition (polar residues); that stretch reads SSTSPKGKQPTTAEK. Over residues 26 to 35 the composition is skewed to basic and acidic residues; that stretch reads SATKKEDKVP. 8 consecutive repeat copies span residues 123-127, 128-132, 133-137, 143-147, 148-152, 153-157, 158-162, and 163-167. Residues 123–167 form an 8 X repeats starting with a Trp in each unit region; the sequence is WSNQTWNNSIWSNETQNIQSWSNHSWNTQTWCTQSWNNQAWNSPF. The segment at 123–167 is sufficient for transactivation activity; the sequence is WSNQTWNNSIWSNETQNIQSWSNHSWNTQTWCTQSWNNQAWNSPF. Positions 168–232 are sufficient for strong transactivation activity; the sequence is YNCGEESLQS…YSTNMQPEDV (65 aa).

The protein belongs to the Nanog homeobox family.

It is found in the nucleus. Probable transcriptional regulator. In Pan troglodytes (Chimpanzee), this protein is Putative homeobox protein NANOG2 (NANOGP1).